The chain runs to 83 residues: Small ribosomal subunit protein bS16 (83 aa).

This sequence belongs to the bacterial ribosomal protein bS16 family.

This is Small ribosomal subunit protein bS16 from Pseudomonas aeruginosa (strain UCBPP-PA14).